Reading from the N-terminus, the 347-residue chain is Photosystem II protein D1 (347 aa).

The next 3 helical transmembrane spans lie at 32–49, 121–136, and 145–159; these read YIGW…LATV, HFIL…EWEF, and WIFV…AASA. Residue histidine 121 participates in chlorophyll a binding. Tyrosine 129 lines the pheophytin a pocket. Aspartate 173 and glutamate 192 together coordinate [CaMn4O5] cluster. Residues 200–221 form a helical membrane-spanning segment; sequence FHILGVAAVFGGSLFSAMHGSL. Histidine 201 is a chlorophyll a binding site. A quinone contacts are provided by residues histidine 218 and 267–268; that span reads SF. Histidine 218 contacts Fe cation. Residue histidine 275 coordinates Fe cation. A helical membrane pass occupies residues 277–291; it reads FLAAWPVIGIWFTAL. Residues histidine 335, glutamate 336, aspartate 345, and alanine 347 each contribute to the [CaMn4O5] cluster site.

It belongs to the reaction center PufL/M/PsbA/D family. As to quaternary structure, PSII is composed of 1 copy each of membrane proteins PsbA, PsbB, PsbC, PsbD, PsbE, PsbF, PsbH, PsbI, PsbJ, PsbK, PsbL, PsbM, PsbT, PsbX, PsbY, PsbZ, Psb30/Ycf12, at least 3 peripheral proteins of the oxygen-evolving complex and a large number of cofactors. It forms dimeric complexes. The cofactor is The D1/D2 heterodimer binds P680, chlorophylls that are the primary electron donor of PSII, and subsequent electron acceptors. It shares a non-heme iron and each subunit binds pheophytin, quinone, additional chlorophylls, carotenoids and lipids. D1 provides most of the ligands for the Mn4-Ca-O5 cluster of the oxygen-evolving complex (OEC). There is also a Cl(-1) ion associated with D1 and D2, which is required for oxygen evolution. The PSII complex binds additional chlorophylls, carotenoids and specific lipids.. Tyr-164 forms a radical intermediate that is referred to as redox-active TyrZ, YZ or Y-Z.

The protein localises to the plastid. The protein resides in the chloroplast thylakoid membrane. It carries out the reaction 2 a plastoquinone + 4 hnu + 2 H2O = 2 a plastoquinol + O2. Its function is as follows. Photosystem II (PSII) is a light-driven water:plastoquinone oxidoreductase that uses light energy to abstract electrons from H(2)O, generating O(2) and a proton gradient subsequently used for ATP formation. It consists of a core antenna complex that captures photons, and an electron transfer chain that converts photonic excitation into a charge separation. The D1/D2 (PsbA/PsbD) reaction center heterodimer binds P680, the primary electron donor of PSII as well as several subsequent electron acceptors. This Heterocapsa niei (Dinoflagellate) protein is Photosystem II protein D1.